The following is a 396-amino-acid chain: Phosphoglycerate kinase (396 aa).

Substrate contacts are provided by residues 21 to 23 (DIN), Arg36, 59 to 62 (HFGR), Arg114, and Arg147. Residues Lys197, Glu319, and 349-352 (GGDT) contribute to the ATP site.

Belongs to the phosphoglycerate kinase family. As to quaternary structure, monomer.

The protein localises to the cytoplasm. It carries out the reaction (2R)-3-phosphoglycerate + ATP = (2R)-3-phospho-glyceroyl phosphate + ADP. Its pathway is carbohydrate degradation; glycolysis; pyruvate from D-glyceraldehyde 3-phosphate: step 2/5. The protein is Phosphoglycerate kinase of Jannaschia sp. (strain CCS1).